The sequence spans 152 residues: UPF0178 protein YaiI (152 aa).

It belongs to the UPF0178 family.

The polypeptide is UPF0178 protein YaiI (Escherichia coli O6:K15:H31 (strain 536 / UPEC)).